The chain runs to 535 residues: Genetic interactor of prohibitins 3, mitochondrial (535 aa).

Residues 1–38 (MLPVSRLCVRSSLRKLVFVRFVSCTSCGVTLQNNNVRG) constitute a mitochondrion transit peptide. One can recognise a CP-type G domain in the interval 111–283 (MQEVYRHVPA…INDLPGYSTN (173 aa)).

Belongs to the TRAFAC class YlqF/YawG GTPase family. GEP3 subfamily.

The protein resides in the mitochondrion. Functionally, may be involved in the mitochondrial lipid metabolism. The chain is Genetic interactor of prohibitins 3, mitochondrial (GEP3) from Lachancea thermotolerans (strain ATCC 56472 / CBS 6340 / NRRL Y-8284) (Yeast).